Here is a 173-residue protein sequence, read N- to C-terminus: Small ribosomal subunit protein uS5 (173 aa).

The S5 DRBM domain maps to L18–V81.

The protein belongs to the universal ribosomal protein uS5 family. In terms of assembly, part of the 30S ribosomal subunit. Contacts proteins S4 and S8.

Its function is as follows. With S4 and S12 plays an important role in translational accuracy. Functionally, located at the back of the 30S subunit body where it stabilizes the conformation of the head with respect to the body. The polypeptide is Small ribosomal subunit protein uS5 (Bordetella avium (strain 197N)).